The primary structure comprises 414 residues: Multifunctional CCA protein (414 aa).

Positions 8 and 11 each coordinate ATP. CTP-binding residues include Gly8 and Arg11. Mg(2+) contacts are provided by Asp21 and Asp23. Residues Arg91, Arg143, and Arg146 each coordinate ATP. Arg91, Arg143, and Arg146 together coordinate CTP. The 102-residue stretch at 232 to 333 (TGVHVMMVID…TRLVERCDAL (102 aa)) folds into the HD domain.

The protein belongs to the tRNA nucleotidyltransferase/poly(A) polymerase family. Bacterial CCA-adding enzyme type 1 subfamily. Monomer. Can also form homodimers and oligomers. It depends on Mg(2+) as a cofactor. Ni(2+) serves as cofactor.

It catalyses the reaction a tRNA precursor + 2 CTP + ATP = a tRNA with a 3' CCA end + 3 diphosphate. It carries out the reaction a tRNA with a 3' CCA end + 2 CTP + ATP = a tRNA with a 3' CCACCA end + 3 diphosphate. Functionally, catalyzes the addition and repair of the essential 3'-terminal CCA sequence in tRNAs without using a nucleic acid template. Adds these three nucleotides in the order of C, C, and A to the tRNA nucleotide-73, using CTP and ATP as substrates and producing inorganic pyrophosphate. tRNA 3'-terminal CCA addition is required both for tRNA processing and repair. Also involved in tRNA surveillance by mediating tandem CCA addition to generate a CCACCA at the 3' terminus of unstable tRNAs. While stable tRNAs receive only 3'-terminal CCA, unstable tRNAs are marked with CCACCA and rapidly degraded. This chain is Multifunctional CCA protein, found in Cupriavidus metallidurans (strain ATCC 43123 / DSM 2839 / NBRC 102507 / CH34) (Ralstonia metallidurans).